We begin with the raw amino-acid sequence, 1069 residues long: Protocadherin-7 (1069 aa).

The signal sequence occupies residues 1–28 (MLRMRTAGWARGWCLGCCLLLPLSLSLA). Cadherin domains are found at residues 29–143 (AAKQ…TPTF), 144–308 (PSPV…SPRF), 309–415 (EKSV…VPSI), 424–535 (PLKD…PPMF), 536–639 (GQSV…DPKF), 640–742 (MQDV…APTV), and 745–862 (PKNI…IPLT). Over 29–879 (AAKQLLRYRL…SYEISKQRLS (851 aa)) the chain is Extracellular. N-linked (GlcNAc...) asparagine glycosylation occurs at Asn-79. Residues 182-242 (LLQEPGGGGS…GGTNPGGRSS (61 aa)) are disordered. Over residues 207–221 (PGGGGNGASGGGSGG) the composition is skewed to gly residues. N-linked (GlcNAc...) asparagine glycosylation is found at Asn-689, Asn-747, Asn-780, Asn-822, Asn-840, and Asn-845. The chain crosses the membrane as a helical span at residues 880–900 (IVIGVVAGIMTVILIILIVVM). Topologically, residues 901-1069 (ARYCRSKNKN…RLHPYITVFG (169 aa)) are cytoplasmic. The segment at 910 to 988 (NGYEAGKKDH…RYRSVNGGPG (79 aa)) is disordered. Over residues 930–944 (KSKKPKKDKKNKKSK) the composition is skewed to basic residues. Phosphoserine occurs at positions 989 and 1011.

Expressed predominantly in brain and heart and at lower levels in various other tissues.

The protein resides in the cell membrane. In Homo sapiens (Human), this protein is Protocadherin-7 (PCDH7).